Here is a 231-residue protein sequence, read N- to C-terminus: Killer cell lectin-like receptor subfamily F member 1 (231 aa).

Over 1–38 (MQDEERYMTLNVQSKKRSSAQTSQLTFKDYSVTLHWYK) the chain is Cytoplasmic. Residue Tyr-7 is modified to Phosphotyrosine. The chain crosses the membrane as a helical; Signal-anchor for type II membrane protein span at residues 39-59 (ILLGISGTVNGILTLTLISLI). The Extracellular portion of the chain corresponds to 60 to 231 (LLVSQGVLLK…SSVFKWICQY (172 aa)). 4 N-linked (GlcNAc...) asparagine glycosylation sites follow: Asn-77, Asn-91, Asn-96, and Asn-176. Positions 121–230 (YQGKCYWFSN…CSSVFKWICQ (110 aa)) constitute a C-type lectin domain. 2 cysteine pairs are disulfide-bonded: Cys-142–Cys-229 and Cys-208–Cys-221.

As to quaternary structure, homodimer. Interacts with CLEC2B. Phosphorylated on Tyr-7; this phosphorylation is required for NKp80/KLRF1-mediated cytotoxicity. In terms of tissue distribution, strongly expressed in peripheral blood leukocytes and spleen, with weaker expression in lymph node and adult liver, and no expression detected in bone marrow, thymus, and fetal liver. Not expressed in brain, heart, placenta, lung, kidney, skeletal muscle, and pancreas. Within peripheral blood leukocyte and immunocyte cell lines, expression was predominant in NK cells but was also detected in monocytes.

Its subcellular location is the membrane. Functions as an activating receptor involved in immunosurveillance upon binding to various ligands displayed at the surface of myeloid cells. Upon interaction with CLEC2B ligand, stimulates NK-cell cytotoxicity and cytokine production leading to the cytolysis of malignant CLEC2B-expressing myeloid cells. Actviation of the common cytotoxicity pathway involves SRC and SYK kinases. In Homo sapiens (Human), this protein is Killer cell lectin-like receptor subfamily F member 1 (KLRF1).